A 190-amino-acid polypeptide reads, in one-letter code: Small ribosomal subunit protein mS23 (190 aa).

At Ala2 the chain carries N-acetylalanine. At Lys83 the chain carries N6-succinyllysine. Residue Lys102 is modified to N6-acetyllysine. The disordered stretch occupies residues 137-190 (KARTQQEGSQVSRKSESMGVESQTALEENPPLKEVPQAQHLESPGEESKGLSPP).

Belongs to the mitochondrion-specific ribosomal protein mS23 family. In terms of assembly, component of the mitochondrial ribosome small subunit (28S) which comprises a 12S rRNA and about 30 distinct proteins.

It localises to the mitochondrion. This Bos taurus (Bovine) protein is Small ribosomal subunit protein mS23.